The sequence spans 416 residues: Zinc finger protein 92 homolog (416 aa).

The KRAB domain occupies 14–85; that stretch reads VSFEDVSVYF…DIPRTWATAG (72 aa). The tract at residues 86–125 is disordered; that stretch reads LHIGDRTQSKTSTSTQKHSGRQLPGADPQGGKEGQAARSS. 8 C2H2-type zinc fingers span residues 152–174, 180–202, 208–230, 236–258, 264–286, 292–314, 320–342, and 348–370; these read YLCQQCGKAFSRSSNLIKHRIIH, YACPECGKLFRRSFALLEHQRIH, YACPECSKTFTRSSNLIKHQVIH, FACGDCGKLFRRSFALLEHARVH, YACPECGKAFSRSSNLIEHQRTH, YACGQCAKAFKGVSQLIHHQRSH, FACRECGKAFRGRSGLSQHRRVH, and YECSDCGKAFGRRANLFKHQAVH. Positions 368–416 are disordered; sequence AVHGARRPAKAETARRLAGPGSTGPGSAVAATSPPRPSTAARPSRPSRR. Residues 394 to 416 show a composition bias toward low complexity; the sequence is SAVAATSPPRPSTAARPSRPSRR.

It belongs to the krueppel C2H2-type zinc-finger protein family.

It is found in the nucleus. Functionally, KRAB domain-containing zinc-finger protein that represses B1/Alu SINE transposable elements and modulates the transcription of nearby genes in a tissue-specific manner. It regulates glucose homeostasis and lipid metabolism by modulating the expression of the endocrine cell-defining transcription factor, MAFB, in pancreatic islets and, the fat metabolism regulator, ACACB, in adipose tissue and muscle. The polypeptide is Zinc finger protein 92 homolog (ZFP92) (Homo sapiens (Human)).